We begin with the raw amino-acid sequence, 442 residues long: Alpha-1,6-mannosyl-glycoprotein 2-beta-N-acetylglucosaminyltransferase (442 aa).

Topologically, residues 1–9 are cytoplasmic; the sequence is MRFRIYKRK. The helical; Signal-anchor for type II membrane protein transmembrane segment at 10-29 threads the bilayer; the sequence is VLILTLVVAACGFVLWSSNG. At 30-442 the chain is on the lumenal side; sequence RQRKSDALGP…ELCKSYRRLQ (413 aa). Asn64 and Asn81 each carry an N-linked (GlcNAc...) asparagine glycan. Residues 118 to 122 and Asp149 contribute to the substrate site; that span reads QVHNR. Cys191 and Cys205 are joined by a disulfide. 224 to 228 contributes to the substrate binding site; it reads QTKHH. Residue Asp256 participates in Mn(2+) binding. Cys278 and Cys281 are oxidised to a cystine. Arg293 provides a ligand contact to substrate. 3 cysteine pairs are disulfide-bonded: Cys329/Cys352, Cys334/Cys435, and Cys373/Cys381. His369 contacts Mn(2+).

Belongs to the glycosyltransferase 16 (GT16) protein family. As to quaternary structure, homodimer. It depends on Mn(2+) as a cofactor. In terms of tissue distribution, detected in liver, lung, testis, kidney, brain, spleen, thymus, uterus and intestine.

The protein localises to the golgi apparatus membrane. The catalysed reaction is an N(4)-{beta-D-GlcNAc-(1-&gt;2)-alpha-D-Man-(1-&gt;3)-[alpha-D-Man-(1-&gt;6)]-beta-D-Man-(1-&gt;4)-beta-D-GlcNAc-(1-&gt;4)-beta-D-GlcNAc}-L-asparaginyl-[protein] + UDP-N-acetyl-alpha-D-glucosamine = N(4)-{beta-D-GlcNAc-(1-&gt;2)-alpha-D-Man-(1-&gt;3)-[beta-D-GlcNAc-(1-&gt;2)-alpha-D-Man-(1-&gt;6)]-beta-D-Man-(1-&gt;4)-beta-D-GlcNAc-(1-&gt;4)-beta-D-GlcNAc}-L-asparaginyl-[protein] + UDP + H(+). Its pathway is protein modification; protein glycosylation. Its function is as follows. Plays an essential role in protein N-glycosylation. Catalyzes the transfer of N-acetylglucosamine (GlcNAc) onto the free terminal mannose moiety in the core structure of the nascent N-linked glycan chain, giving rise to the second branch in complex glycans. This Mus musculus (Mouse) protein is Alpha-1,6-mannosyl-glycoprotein 2-beta-N-acetylglucosaminyltransferase (Mgat2).